The primary structure comprises 316 residues: Protoheme IX farnesyltransferase (316 aa).

Helical transmembrane passes span 35 to 55 (VMVLVIFTALVGMVVSQGHVQ), 56 to 76 (PAIGAISLLAIAVGAGASGCL), 119 to 139 (VVLGLAANLLAAALLAFTIVF), 156 to 176 (IVIGGAAGALPPVIGQAVVTG), 183 to 203 (LILFAIIFIWTPPHFWALALI), 229 to 246 (IVWYSLLLAPLGLVPVAL), 250 to 272 (GLVYAVVGLVGGLGMVAFSIRVL), and 283 to 303 (AAMGMFGFSILYLFALFSALL).

This sequence belongs to the UbiA prenyltransferase family. Protoheme IX farnesyltransferase subfamily.

The protein resides in the cell inner membrane. The catalysed reaction is heme b + (2E,6E)-farnesyl diphosphate + H2O = Fe(II)-heme o + diphosphate. It functions in the pathway porphyrin-containing compound metabolism; heme O biosynthesis; heme O from protoheme: step 1/1. Its function is as follows. Converts heme B (protoheme IX) to heme O by substitution of the vinyl group on carbon 2 of heme B porphyrin ring with a hydroxyethyl farnesyl side group. The protein is Protoheme IX farnesyltransferase of Methylobacterium radiotolerans (strain ATCC 27329 / DSM 1819 / JCM 2831 / NBRC 15690 / NCIMB 10815 / 0-1).